A 141-amino-acid chain; its full sequence is HTH-type transcriptional repressor NsrR (141 aa).

The HTH rrf2-type domain maps to 2-129 (QLTSFTDYAL…DECTIESLLS (128 aa)). Positions 28-51 (ITEVTDLFGVSRNHMVKVINRLGQ) form a DNA-binding region, H-T-H motif. [2Fe-2S] cluster contacts are provided by C91, C96, and C102.

Requires [2Fe-2S] cluster as cofactor.

Nitric oxide-sensitive repressor of genes involved in protecting the cell against nitrosative stress. May require iron for activity. This Vibrio parahaemolyticus serotype O3:K6 (strain RIMD 2210633) protein is HTH-type transcriptional repressor NsrR.